We begin with the raw amino-acid sequence, 619 residues long: Nucleolar GTP-binding protein 2 (619 aa).

A compositionally biased stretch (basic and acidic residues) spans Met-1–Arg-10. The disordered stretch occupies residues Met-1–Lys-24. The CP-type G domain occupies Trp-222–Pro-383. GTP-binding positions include Gly-332–Ser-339 and Asp-376–Ile-380. Residues Pro-473–Lys-619 are disordered. A compositionally biased stretch (basic and acidic residues) spans Met-489–Ser-500. A compositionally biased stretch (acidic residues) spans Ser-536–Ala-546. Positions Glu-547–Ala-556 are enriched in basic and acidic residues. Over residues Ser-565 to Ala-603 the composition is skewed to acidic residues.

The protein belongs to the TRAFAC class YlqF/YawG GTPase family. NOG2 subfamily.

The protein resides in the nucleus. It localises to the nucleolus. Its function is as follows. GTPase that associates with pre-60S ribosomal subunits in the nucleolus and is required for their nuclear export and maturation. The chain is Nucleolar GTP-binding protein 2 (nog-2) from Neurospora crassa (strain ATCC 24698 / 74-OR23-1A / CBS 708.71 / DSM 1257 / FGSC 987).